The primary structure comprises 560 residues: DNA ligase B (560 aa).

K124 serves as the catalytic N6-AMP-lysine intermediate.

The protein belongs to the NAD-dependent DNA ligase family. LigB subfamily.

It carries out the reaction NAD(+) + (deoxyribonucleotide)n-3'-hydroxyl + 5'-phospho-(deoxyribonucleotide)m = (deoxyribonucleotide)n+m + AMP + beta-nicotinamide D-nucleotide.. Functionally, catalyzes the formation of phosphodiester linkages between 5'-phosphoryl and 3'-hydroxyl groups in double-stranded DNA using NAD as a coenzyme and as the energy source for the reaction. The protein is DNA ligase B of Escherichia coli (strain K12 / DH10B).